A 481-amino-acid polypeptide reads, in one-letter code: ATP synthase subunit beta, chloroplastic (481 aa).

163-170 (GGAGVGKT) serves as a coordination point for ATP.

This sequence belongs to the ATPase alpha/beta chains family. In terms of assembly, F-type ATPases have 2 components, CF(1) - the catalytic core - and CF(0) - the membrane proton channel. CF(1) has five subunits: alpha(3), beta(3), gamma(1), delta(1), epsilon(1). CF(0) has four main subunits: a(1), b(1), b'(1) and c(9-12).

It is found in the plastid. Its subcellular location is the chloroplast thylakoid membrane. It catalyses the reaction ATP + H2O + 4 H(+)(in) = ADP + phosphate + 5 H(+)(out). Produces ATP from ADP in the presence of a proton gradient across the membrane. The catalytic sites are hosted primarily by the beta subunits. The chain is ATP synthase subunit beta, chloroplastic from Tupiella akineta (Green alga).